The chain runs to 1534 residues: Ribosome-binding protein 1 (1534 aa).

Residues Met-1–Gln-7 lie on the Lumenal side of the membrane. A helical membrane pass occupies residues Thr-8 to Val-28. The Cytoplasmic portion of the chain corresponds to Ser-29–Val-1534. Disordered stretches follow at residues Gln-45–Asn-91 and Pro-125–Ala-152. The span at Thr-52–Glu-63 shows a compositional bias: basic residues. Residues Lys-64–Pro-88 are compositionally biased toward basic and acidic residues. Over residues Pro-125 to Ser-135 the composition is skewed to low complexity. A Glycyl lysine isopeptide (Lys-Gly) (interchain with G-Cter in SUMO2) cross-link involves residue Lys-148. Phosphoserine occurs at positions 159 and 165. 3 disordered regions span residues Ala-173–Leu-780, Lys-968–Leu-987, and Arg-1021–Asn-1082. Residues Lys-175–Thr-194 are compositionally biased toward low complexity. 54 tandem repeats follow at residues Ala-197 to Gln-206, Asn-207 to Pro-216, Asn-217 to Leu-226, Asn-227 to Gln-236, Asn-237 to Pro-246, Asn-247 to Gln-256, Asn-257 to Gln-266, Asn-267 to Pro-276, Asn-277 to Pro-286, Asn-287 to Pro-296, Asn-297 to Pro-306, Asn-307 to Gln-316, Asn-317 to Pro-326, Asn-327 to Gln-336, Asn-337 to Gln-346, Asn-347 to Pro-356, Asn-357 to Pro-366, Asn-367 to Pro-376, Asn-377 to Pro-386, Asn-387 to Gln-396, Asn-397 to Gln-406, Asn-407 to Gln-416, Asn-417 to Ser-426, Ser-427 to Pro-436, Asn-437 to Pro-446, Asn-447 to Gln-456, Asn-457 to Pro-466, Asn-467 to Gln-476, Asn-477 to Ser-486, Asn-487 to Gln-496, Asn-497 to Pro-506, Asn-507 to Gln-516, Asn-517 to Pro-526, Asn-527 to Gln-536, Asn-537 to Pro-546, Asn-547 to Pro-556, Asn-557 to Pro-566, Asn-567 to Pro-576, Asn-577 to Pro-586, Asn-587 to Pro-596, Asn-597 to Pro-606, Asn-607 to Pro-616, Asn-617 to Pro-626, Asn-627 to Pro-636, Asn-637 to Pro-646, Asn-647 to Gln-656, Asn-657 to Pro-666, Asn-667 to Ala-676, Asn-677 to Ala-686, Gly-687 to Pro-696, Asn-697 to Pro-706, Asn-707 to Pro-716, Asn-717 to Ala-726, and Asn-727 to Pro-736. Positions Ala-197–Pro-736 are 54 X 10 AA tandem repeats of [NASG]-[QL]-[GS]-[KRT]-[KR]-[AVTSEG]-[ED]-[AGVLS]-[ATGSV]-[PQLSA]. Thr-275 is modified (phosphothreonine). The segment covering Ala-395–Gln-428 has biased composition (polar residues). A compositionally biased stretch (polar residues) spans Gly-474–Gly-499. Polar residues predominate over residues Thr-705–Gln-718. Residue Ser-715 is modified to Phosphoserine. Residue Ser-747 is modified to Phosphoserine. A Glycyl lysine isopeptide (Lys-Gly) (interchain with G-Cter in SUMO1) cross-link involves residue Lys-752. Ser-1032 bears the Phosphoserine mark. A compositionally biased stretch (basic and acidic residues) spans Ala-1059–Ala-1080. Lys-1064 is modified (N6-acetyllysine). Phosphoserine occurs at positions 1091 and 1110. Disordered regions lie at residues Glu-1224 to Asn-1251, Lys-1391 to Lys-1416, and Glu-1509 to Val-1534. Over residues Glu-1509–Ser-1528 the composition is skewed to basic and acidic residues.

The protein resides in the endoplasmic reticulum membrane. Acts as a ribosome receptor and mediates interaction between the ribosome and the endoplasmic reticulum membrane. The chain is Ribosome-binding protein 1 (RRBP1) from Canis lupus familiaris (Dog).